The primary structure comprises 292 residues: Cbb3-type cytochrome c oxidase subunit CcoP (292 aa).

The next 2 helical transmembrane spans lie at phenylalanine 11–isoleucine 31 and valine 62–glycine 82. 2 consecutive Cytochrome c domains span residues glutamate 116–isoleucine 195 and glutamine 205–lysine 288. Residues cysteine 129, cysteine 132, histidine 133, methionine 174, cysteine 219, cysteine 222, histidine 223, and methionine 264 each contribute to the heme c site.

The protein belongs to the CcoP / FixP family. As to quaternary structure, component of the cbb3-type cytochrome c oxidase at least composed of CcoN, CcoO, CcoQ and CcoP. The cofactor is heme c.

It is found in the cell inner membrane. The protein operates within energy metabolism; oxidative phosphorylation. Its function is as follows. C-type cytochrome. Part of the cbb3-type cytochrome c oxidase complex. CcoP subunit is required for transferring electrons from donor cytochrome c via its heme groups to CcoO subunit. From there, electrons are shuttled to the catalytic binuclear center of CcoN subunit where oxygen reduction takes place. The complex also functions as a proton pump. This Helicobacter pylori (Campylobacter pylori) protein is Cbb3-type cytochrome c oxidase subunit CcoP.